Here is a 165-residue protein sequence, read N- to C-terminus: CDP-archaeol synthase (165 aa).

4 consecutive transmembrane segments (helical) span residues Gly41–Gly61, Ile72–Ile92, Ala103–Phe123, and Trp127–Leu147.

It belongs to the CDP-archaeol synthase family. The cofactor is Mg(2+).

It localises to the cell membrane. It catalyses the reaction 2,3-bis-O-(geranylgeranyl)-sn-glycerol 1-phosphate + CTP + H(+) = CDP-2,3-bis-O-(geranylgeranyl)-sn-glycerol + diphosphate. Its pathway is membrane lipid metabolism; glycerophospholipid metabolism. Catalyzes the formation of CDP-2,3-bis-(O-geranylgeranyl)-sn-glycerol (CDP-archaeol) from 2,3-bis-(O-geranylgeranyl)-sn-glycerol 1-phosphate (DGGGP) and CTP. This reaction is the third ether-bond-formation step in the biosynthesis of archaeal membrane lipids. In Methanoregula boonei (strain DSM 21154 / JCM 14090 / 6A8), this protein is CDP-archaeol synthase.